We begin with the raw amino-acid sequence, 69 residues long: MKTNKYVEELQAKSTTELNETLVAAKKELFNLRFQNATNQLDNTSRIKDVRKNIARIQTVISQKAKAAN.

It belongs to the universal ribosomal protein uL29 family.

The polypeptide is Large ribosomal subunit protein uL29 (Lachnoclostridium phytofermentans (strain ATCC 700394 / DSM 18823 / ISDg) (Clostridium phytofermentans)).